The chain runs to 493 residues: Glycerol kinase (493 aa).

Residue threonine 11 coordinates ADP. ATP contacts are provided by threonine 11, threonine 12, and serine 13. Residue threonine 11 coordinates sn-glycerol 3-phosphate. Arginine 15 is a binding site for ADP. Sn-glycerol 3-phosphate is bound by residues arginine 80, glutamate 81, tyrosine 132, and aspartate 241. Glycerol-binding residues include arginine 80, glutamate 81, tyrosine 132, aspartate 241, and glutamine 242. The ADP site is built by threonine 263 and glycine 306. Residues threonine 263, glycine 306, glutamine 310, and glycine 408 each contribute to the ATP site. Glycine 408 contacts ADP.

This sequence belongs to the FGGY kinase family.

The catalysed reaction is glycerol + ATP = sn-glycerol 3-phosphate + ADP + H(+). The protein operates within polyol metabolism; glycerol degradation via glycerol kinase pathway; sn-glycerol 3-phosphate from glycerol: step 1/1. Inhibited by fructose 1,6-bisphosphate (FBP). Its function is as follows. Key enzyme in the regulation of glycerol uptake and metabolism. Catalyzes the phosphorylation of glycerol to yield sn-glycerol 3-phosphate. This Cereibacter sphaeroides (strain ATCC 17023 / DSM 158 / JCM 6121 / CCUG 31486 / LMG 2827 / NBRC 12203 / NCIMB 8253 / ATH 2.4.1.) (Rhodobacter sphaeroides) protein is Glycerol kinase.